Reading from the N-terminus, the 519-residue chain is UPF0053 protein bbp_300 (519 aa).

A run of 7 helical transmembrane segments spans residues 13–35 (LLTLIILEIVLGIDNLVFVAILS), 48–70 (LIGLSFALFMRLGLLALMSWMVT), 80–102 (YFSFSGRDLILLFGGLFLLFKAT), 123–145 (AGFWTIVIQIVILDSIFSLDAII), 150–172 (TINNLPIMMIAVVIAMVLMLIAS), 185–207 (VVVLCLSFLLMIGCNLVSEALGF), and 212–231 (GYLYAAIGFSIIIEIFNQIA). CBS domains lie at 311–373 (MTPR…IIDF) and 374–434 (SSTT…DADE).

The protein belongs to the UPF0053 family.

Its subcellular location is the cell membrane. The protein is UPF0053 protein bbp_300 of Buchnera aphidicola subsp. Baizongia pistaciae (strain Bp).